We begin with the raw amino-acid sequence, 424 residues long: Cyclin-dependent kinase D-1 (424 aa).

Residues 19 to 299 (YLKREVLGEG…AQQALEHRYF (281 aa)) form the Protein kinase domain. ATP contacts are provided by residues 25-33 (LGEGTYGVV) and Lys48. Position 29 is a phosphothreonine (Thr29). Tyr30 is subject to Phosphotyrosine. The active-site Proton acceptor is the Asp141. Residue Ser168 is modified to Phosphoserine. The residue at position 174 (Thr174) is a Phosphothreonine. Disordered stretches follow at residues 303-337 (PAPT…PVVL) and 359-424 (ADRT…GYTE). Residues 359–374 (ADRTEEHPSGARHMDD) show a composition bias toward basic and acidic residues.

This sequence belongs to the protein kinase superfamily. CMGC Ser/Thr protein kinase family. CDC2/CDKX subfamily.

The protein resides in the nucleus. The enzyme catalyses L-seryl-[protein] + ATP = O-phospho-L-seryl-[protein] + ADP + H(+). It carries out the reaction L-threonyl-[protein] + ATP = O-phospho-L-threonyl-[protein] + ADP + H(+). The catalysed reaction is [DNA-directed RNA polymerase] + ATP = phospho-[DNA-directed RNA polymerase] + ADP + H(+). This Oryza sativa subsp. indica (Rice) protein is Cyclin-dependent kinase D-1 (CDKD-1).